The sequence spans 76 residues: Omega-conotoxin-like Ai6.3 (76 aa).

The first 22 residues, 1 to 22 (MKLTCLMIVAVLFLTAWTFVTA), serve as a signal peptide directing secretion. A propeptide spanning residues 23 to 50 (VPDSSNALENLYLKAHHEMNNPEDSELN) is cleaved from the precursor. 3 cysteine pairs are disulfide-bonded: C53–C67, C60–C71, and C66–C75.

Belongs to the conotoxin O1 superfamily. Expressed by the venom duct.

It localises to the secreted. Its function is as follows. Omega-conotoxins act at presynaptic membranes, they bind and block voltage-gated calcium channels (Cav). The sequence is that of Omega-conotoxin-like Ai6.3 from Conus ammiralis (Admiral cone).